Consider the following 262-residue polypeptide: uncharacterized protein (262 aa).

3 consecutive transmembrane segments (helical) span residues 4–24 (LIVFLSMLSSSVAGFFGRFLG), 28–48 (VSRFNLIIFLILLVFSICLFR), and 62–82 (CYLALVCQISLFLVLLRSHIL). The stretch at 152-181 (EREARAQEHDRISAEVETITSACENLEAAM) forms a coiled coil.

It is found in the mitochondrion membrane. This is an uncharacterized protein from Arabidopsis thaliana (Mouse-ear cress).